The following is a 35-amino-acid chain: Conotoxin TxMEKL-0422 (35 aa).

Residues 1 to 35 (NPASCCSCADVDPGRASRKTPKGEDQVFIKEKDRC) form a disordered region. Basic and acidic residues predominate over residues 21–35 (PKGEDQVFIKEKDRC).

Contains disulfide bonds. Expressed by the venom duct.

The protein localises to the secreted. In Conus textile (Cloth-of-gold cone), this protein is Conotoxin TxMEKL-0422.